The primary structure comprises 554 residues: Zinc finger protein 426 (554 aa).

In terms of domain architecture, KRAB spans 42–112 (VTFDDVAVDF…QGGVLQGWEM (71 aa)). The C2H2-type 1; atypical zinc finger occupies 146–174 (CDCEQCGEVFSEHSCLKTHVRTQSTGNTH). 11 consecutive C2H2-type zinc fingers follow at residues 224-246 (FECS…MRTH), 280-302 (YKCK…MRTH), 308-330 (YECK…GRTH), 336-358 (YVCK…VRSH), 364-386 (YECK…IRTH), 392-414 (FVCV…LRTH), 420-442 (CECK…MRTH), 448-470 (YTCK…MRIH), 476-498 (YECK…ERTH), 504-526 (YECK…EKTH), and 532-554 (YKCQ…EQIH).

Its subcellular location is the nucleus. May be involved in transcriptional regulation. In Homo sapiens (Human), this protein is Zinc finger protein 426 (ZNF426).